We begin with the raw amino-acid sequence, 365 residues long: Flagellin 1 (365 aa).

Belongs to the bacterial flagellin family.

Its subcellular location is the secreted. The protein localises to the bacterial flagellum. Flagellin is the subunit protein which polymerizes to form the filaments of bacterial flagella. In Proteus mirabilis, this protein is Flagellin 1 (fliC1).